Here is a 316-residue protein sequence, read N- to C-terminus: Apolipoprotein E (316 aa).

Positions 1 to 18 (MKVLWVALVVALLAGCQA) are cleaved as a signal peptide. A run of 8 repeats spans residues 79 to 100 (VLME…GQLA), 101 to 122 (PMAQ…ARLG), 123 to 144 (SDME…AMLG), 145 to 166 (QSTE…KRLL), 167 to 188 (RDAD…EGAE), 189 to 210 (RSVS…SRAA), 211 to 232 (TLST…QKLH), and 233 to 254 (GRLE…QQLE). The interval 79–254 (VLMEETMKEV…RLDKMRQQLE (176 aa)) is 8 X 22 AA approximate tandem repeats. A Methionine sulfoxide modification is found at methionine 142. Phosphoserine is present on serine 146. Positions 157–167 (HLRKLRKRLLR) are LDL and other lipoprotein receptors binding. Position 161-164 (161-164 (LRKR)) interacts with heparin. Residues 209–289 (AATLSTQVGQ…SWFEPLVEDM (81 aa)) are lipid-binding and lipoprotein association. Residue 228–235 (RQKLHGRL) participates in heparin binding. The homooligomerization stretch occupies residues 265-316 (SQIRLQAEAFQARLRSWFEPLVEDMQRQWAGLVEKVQLALHLSPTSPPSENH). A specificity for association with VLDL region spans residues 277–289 (RLRSWFEPLVEDM).

This sequence belongs to the apolipoprotein A1/A4/E family. As to quaternary structure, homotetramer. May interact with ABCA1; functionally associated with ABCA1 in the biogenesis of HDLs. May interact with APP/A4 amyloid-beta peptide; the interaction is extremely stable in vitro but its physiological significance is unclear. May interact with MAPT. May interact with MAP2. In the cerebrospinal fluid, interacts with secreted SORL1. Interacts with PMEL; this allows the loading of PMEL luminal fragment on ILVs to induce fibril nucleation. APOE exists as multiple glycosylated and sialylated glycoforms within cells and in plasma. The extent of glycosylation and sialylation are tissue and context specific. In terms of processing, glycated in plasma VLDL. Post-translationally, phosphorylated by FAM20C in the extracellular medium.

It localises to the secreted. The protein resides in the extracellular space. It is found in the extracellular matrix. Its subcellular location is the extracellular vesicle. The protein localises to the endosome. It localises to the multivesicular body. Its function is as follows. APOE is an apolipoprotein, a protein associating with lipid particles, that mainly functions in lipoprotein-mediated lipid transport between organs via the plasma and interstitial fluids. APOE is a core component of plasma lipoproteins and is involved in their production, conversion and clearance. Apolipoproteins are amphipathic molecules that interact both with lipids of the lipoprotein particle core and the aqueous environment of the plasma. As such, APOE associates with chylomicrons, chylomicron remnants, very low density lipoproteins (VLDL) and intermediate density lipoproteins (IDL) but shows a preferential binding to high-density lipoproteins (HDL). It also binds a wide range of cellular receptors including the LDL receptor/LDLR and the very low-density lipoprotein receptor/VLDLR that mediate the cellular uptake of the APOE-containing lipoprotein particles. Finally, APOE also has a heparin-binding activity and binds heparan-sulfate proteoglycans on the surface of cells, a property that supports the capture and the receptor-mediated uptake of APOE-containing lipoproteins by cells. This chain is Apolipoprotein E (APOE), found in Ovis aries (Sheep).